Consider the following 24-residue polypeptide: Brevinin-1Ba (24 aa).

A disulfide bridge connects residues cysteine 18 and cysteine 24.

In terms of tissue distribution, expressed by the skin glands.

The protein resides in the secreted. Antibacterial activity against Gram-positive bacterium S.aureus. This is Brevinin-1Ba from Lithobates berlandieri (Rio Grande leopard frog).